A 123-amino-acid chain; its full sequence is Methanesulfonate monooxygenase ferredoxin subunit (123 aa).

The Rieske domain maps to 4–99 (TYLCDAADVA…LKEEDGKLLA (96 aa)). [2Fe-2S] cluster is bound by residues Cys-43, His-45, Cys-63, and His-66.

The protein belongs to the bacterial ring-hydroxylating dioxygenase ferredoxin component family. As to quaternary structure, the MSA monooxygenase system consists of 4 proteins: the 2 subunits of the hydroxylase component (MsmA and MsmB), a ferredoxin (MsmC) and a ferredoxin reductase (MsmD). The ferredoxin component is dimeric. The cofactor is [2Fe-2S] cluster.

The protein resides in the cytoplasm. It catalyses the reaction methanesulfonate + NADH + O2 = sulfite + formaldehyde + NAD(+) + H2O. MSAMO is inhibited by metal chelators (such as bathophenanthroline, bathocuprione, neocuprione, alpha-alpha-dipyridil and sodium EDTA) and by sodium azide, sodium arsenate and potassium cyanide. In terms of biological role, methanesulfonate monooxygenase (MSAMO) mediates the primary degradation of methanesulfonic acid (MSA) to produce formaldehyd and inorganic sulfite by initial hydroxylation of the carbon atom prior to spontaneous cleavage of the unstable hydroxymethanesulfonic acid. MSAMO has a restricted substrate range that includes only the short-chain aliphatic sulfonates (methane- to butanesulfonate) and excludes all larger molecules, such as arylsulfonates and aromatic sulfonates. All MSAMO components are required for enzyme activity. This chain is Methanesulfonate monooxygenase ferredoxin subunit, found in Methylosulfonomonas methylovora.